Consider the following 227-residue polypeptide: Lipoprotein-releasing system ATP-binding protein LolD (227 aa).

Residues 7-227 (LSCRDLGKSY…HLQEGHLVAI (221 aa)) enclose the ABC transporter domain. 43–50 (GTSGSGKS) is a binding site for ATP.

The protein belongs to the ABC transporter superfamily. Lipoprotein translocase (TC 3.A.1.125) family. In terms of assembly, the complex is composed of two ATP-binding proteins (LolD) and two transmembrane proteins (LolC and LolE).

It localises to the cell inner membrane. In terms of biological role, part of the ABC transporter complex LolCDE involved in the translocation of mature outer membrane-directed lipoproteins, from the inner membrane to the periplasmic chaperone, LolA. Responsible for the formation of the LolA-lipoprotein complex in an ATP-dependent manner. In Pseudomonas fluorescens (strain ATCC BAA-477 / NRRL B-23932 / Pf-5), this protein is Lipoprotein-releasing system ATP-binding protein LolD.